The following is a 365-amino-acid chain: MAYKVLVVDDSQFFQVRLKQIINEHPDLEVVGIAANGQEAIDLEESLRPDIISMDYEMPHLDGISAVRSILSKRPIPIVMFSSMTYEGATITLEALDAGAVDFIPKNFAEVSRDSVVLKKRLHEKLLLFAQKAKPSVAARSTTQPSGVRPSALGANLSSSRSPRPASSAPSAPKKRIKGLVKLVAIGASTGGPVAVSEIITRLPANFPVPVIVAQHMPENFTKAFSERLNRQSAVEVREAQDGDLLKSGVVYVAPGGNQLMVDKTGRSIRILDGDARLTYKPSVDVLFASAASAMGDKVLAIVLTGMGADGCDGAKLLKQKGATIWGQDKDSCVVYGMPAAVAKAGLTDEVLPLDQVWQRLVSDV.

The Response regulatory domain occupies 4 to 121 (KVLVVDDSQF…SRDSVVLKKR (118 aa)). 4-aspartylphosphate is present on Asp55. The tract at residues 138–173 (AARSTTQPSGVRPSALGANLSSSRSPRPASSAPSAP) is disordered. A compositionally biased stretch (low complexity) spans 158 to 172 (SSSRSPRPASSAPSA). In terms of domain architecture, CheB-type methylesterase spans 182–365 (KLVAIGASTG…QVWQRLVSDV (184 aa)). Residues Ser189, His216, and Asp310 contribute to the active site.

It belongs to the CheB family. Post-translationally, phosphorylated by CheA. Phosphorylation of the N-terminal regulatory domain activates the methylesterase activity.

It localises to the cytoplasm. It carries out the reaction [protein]-L-glutamate 5-O-methyl ester + H2O = L-glutamyl-[protein] + methanol + H(+). The enzyme catalyses L-glutaminyl-[protein] + H2O = L-glutamyl-[protein] + NH4(+). Its function is as follows. Involved in chemotaxis. Part of a chemotaxis signal transduction system that modulates chemotaxis in response to various stimuli. Catalyzes the demethylation of specific methylglutamate residues introduced into the chemoreceptors (methyl-accepting chemotaxis proteins or MCP) by CheR. Also mediates the irreversible deamidation of specific glutamine residues to glutamic acid. This is Protein-glutamate methylesterase/protein-glutamine glutaminase 1 from Saccharophagus degradans (strain 2-40 / ATCC 43961 / DSM 17024).